A 136-amino-acid chain; its full sequence is Translation initiation factor 5A (136 aa).

Lys36 carries the post-translational modification Hypusine.

This sequence belongs to the eIF-5A family.

The protein resides in the cytoplasm. Functionally, functions by promoting the formation of the first peptide bond. The chain is Translation initiation factor 5A (eIF5A) from Hyperthermus butylicus (strain DSM 5456 / JCM 9403 / PLM1-5).